A 448-amino-acid chain; its full sequence is N-succinylarginine dihydrolase (448 aa).

Substrate-binding positions include 19 to 28 (GGLSYGNVAS), Asn110, and 137 to 138 (HR). The active site involves Glu174. A substrate-binding site is contributed by Arg214. The active site involves His250. Residues Asp252 and Asn365 each coordinate substrate. The active-site Nucleophile is the Cys371.

This sequence belongs to the succinylarginine dihydrolase family. Homodimer.

It catalyses the reaction N(2)-succinyl-L-arginine + 2 H2O + 2 H(+) = N(2)-succinyl-L-ornithine + 2 NH4(+) + CO2. It participates in amino-acid degradation; L-arginine degradation via AST pathway; L-glutamate and succinate from L-arginine: step 2/5. Catalyzes the hydrolysis of N(2)-succinylarginine into N(2)-succinylornithine, ammonia and CO(2). The polypeptide is N-succinylarginine dihydrolase (Pseudomonas syringae pv. syringae (strain B728a)).